We begin with the raw amino-acid sequence, 191 residues long: Ribosome maturation factor RimM (191 aa).

The 78-residue stretch at 114–191 folds into the PRC barrel domain; it reads EDEYYWVDLI…RIVVDWQPDY (78 aa).

The protein belongs to the RimM family. Binds ribosomal protein uS19.

Its subcellular location is the cytoplasm. In terms of biological role, an accessory protein needed during the final step in the assembly of 30S ribosomal subunit, possibly for assembly of the head region. Essential for efficient processing of 16S rRNA. May be needed both before and after RbfA during the maturation of 16S rRNA. It has affinity for free ribosomal 30S subunits but not for 70S ribosomes. This chain is Ribosome maturation factor RimM, found in Paracidovorax citrulli (strain AAC00-1) (Acidovorax citrulli).